The sequence spans 625 residues: tRNA uridine 5-carboxymethylaminomethyl modification enzyme MnmG (625 aa).

Residue 14–19 (GAGHAG) coordinates FAD. 273-287 (GPRYCPSIEDKIVRF) provides a ligand contact to NAD(+).

The protein belongs to the MnmG family. Homodimer. Heterotetramer of two MnmE and two MnmG subunits. The cofactor is FAD.

The protein resides in the cytoplasm. Its function is as follows. NAD-binding protein involved in the addition of a carboxymethylaminomethyl (cmnm) group at the wobble position (U34) of certain tRNAs, forming tRNA-cmnm(5)s(2)U34. In Clostridium botulinum (strain Okra / Type B1), this protein is tRNA uridine 5-carboxymethylaminomethyl modification enzyme MnmG.